The chain runs to 451 residues: Bifunctional protein GlmU (451 aa).

The segment at 1-226 (MVAVAILAAG…YLEISGINDR (226 aa)) is pyrophosphorylase. Residues 7 to 10 (LAAG), lysine 21, glutamine 73, and 78 to 79 (GT) contribute to the UDP-N-acetyl-alpha-D-glucosamine site. A Mg(2+)-binding site is contributed by aspartate 103. The UDP-N-acetyl-alpha-D-glucosamine site is built by glycine 140, glutamate 155, asparagine 170, and asparagine 224. Position 224 (asparagine 224) interacts with Mg(2+). The linker stretch occupies residues 227 to 247 (KQLATAYDILQNRIKDYWMRA). The interval 248 to 451 (GVTLIDPDSI…ISGWRMKTDD (204 aa)) is N-acetyltransferase. Positions 329 and 347 each coordinate UDP-N-acetyl-alpha-D-glucosamine. The active-site Proton acceptor is the histidine 359. The UDP-N-acetyl-alpha-D-glucosamine site is built by tyrosine 362 and asparagine 373. Acetyl-CoA contacts are provided by residues alanine 376, 382–383 (NY), alanine 419, and arginine 436.

It in the N-terminal section; belongs to the N-acetylglucosamine-1-phosphate uridyltransferase family. This sequence in the C-terminal section; belongs to the transferase hexapeptide repeat family. Homotrimer. Requires Mg(2+) as cofactor.

The protein localises to the cytoplasm. The enzyme catalyses alpha-D-glucosamine 1-phosphate + acetyl-CoA = N-acetyl-alpha-D-glucosamine 1-phosphate + CoA + H(+). The catalysed reaction is N-acetyl-alpha-D-glucosamine 1-phosphate + UTP + H(+) = UDP-N-acetyl-alpha-D-glucosamine + diphosphate. Its pathway is nucleotide-sugar biosynthesis; UDP-N-acetyl-alpha-D-glucosamine biosynthesis; N-acetyl-alpha-D-glucosamine 1-phosphate from alpha-D-glucosamine 6-phosphate (route II): step 2/2. The protein operates within nucleotide-sugar biosynthesis; UDP-N-acetyl-alpha-D-glucosamine biosynthesis; UDP-N-acetyl-alpha-D-glucosamine from N-acetyl-alpha-D-glucosamine 1-phosphate: step 1/1. It participates in bacterial outer membrane biogenesis; LPS lipid A biosynthesis. In terms of biological role, catalyzes the last two sequential reactions in the de novo biosynthetic pathway for UDP-N-acetylglucosamine (UDP-GlcNAc). The C-terminal domain catalyzes the transfer of acetyl group from acetyl coenzyme A to glucosamine-1-phosphate (GlcN-1-P) to produce N-acetylglucosamine-1-phosphate (GlcNAc-1-P), which is converted into UDP-GlcNAc by the transfer of uridine 5-monophosphate (from uridine 5-triphosphate), a reaction catalyzed by the N-terminal domain. In Gloeothece citriformis (strain PCC 7424) (Cyanothece sp. (strain PCC 7424)), this protein is Bifunctional protein GlmU.